The sequence spans 90 residues: Acylphosphatase (90 aa).

Residues 4 to 90 (RWRFLIEGSV…TGNDWFDVRT (87 aa)) form the Acylphosphatase-like domain. Residues Arg19 and Asn37 contribute to the active site.

The protein belongs to the acylphosphatase family.

It carries out the reaction an acyl phosphate + H2O = a carboxylate + phosphate + H(+). The sequence is that of Acylphosphatase (acyP) from Synechococcus sp. (strain CC9311).